Reading from the N-terminus, the 262-residue chain is MKPLKILISNDDGVFAEGIRTLAIAAASRGHEVTVVCPDQERSATGHGLTLQAPIRAERADELFNEGIQAWGCSGTPADCVKLALNELLKEKPDLILSGINHGPNLGTDIFCSGTVAAALEGTLEGIPSLAVSIASFQWRKFKLAGELALNIAENAINQKWPKKLLLNLNIPPCDSEQMGKPGWTRLSIRQYQEQFSKRKDPRGNAYYWLAGEAVKDLESAGDGPKEWPSDVSQIETNSPSLTPIQPDLFWRGNVNDLPKLN.

A divalent metal cation contacts are provided by D11, D12, S43, and N101. The span at 220-229 (SAGDGPKEWP) shows a compositional bias: basic and acidic residues. Positions 220-246 (SAGDGPKEWPSDVSQIETNSPSLTPIQ) are disordered. A compositionally biased stretch (polar residues) spans 231-244 (DVSQIETNSPSLTP).

The protein belongs to the SurE nucleotidase family. A divalent metal cation serves as cofactor.

The protein localises to the cytoplasm. It carries out the reaction a ribonucleoside 5'-phosphate + H2O = a ribonucleoside + phosphate. In terms of biological role, nucleotidase that shows phosphatase activity on nucleoside 5'-monophosphates. The polypeptide is 5'-nucleotidase SurE (Prochlorococcus marinus (strain SARG / CCMP1375 / SS120)).